Here is a 1013-residue protein sequence, read N- to C-terminus: Alpha-2-macroglobulin homolog (1013 aa).

Positions 804 to 844 (AQRGANGERDGLRETVPVRPAGARQLLSGSGSVGADKAGGN) are disordered.

Belongs to the protease inhibitor I39 (alpha-2-macroglobulin) family. Bacterial alpha-2-macroglobulin subfamily.

The polypeptide is Alpha-2-macroglobulin homolog (Deinococcus radiodurans (strain ATCC 13939 / DSM 20539 / JCM 16871 / CCUG 27074 / LMG 4051 / NBRC 15346 / NCIMB 9279 / VKM B-1422 / R1)).